A 784-amino-acid chain; its full sequence is MPRALWTAWVWAXIILSTEGASDQASSLSCDSTGVCDGHSRSLNSIPSGLTAGVKSLDLSNNEITYVGNRDLQRCVNLKTLRLGANEIHTVEEDSFFHLRNLEYLDLSYNRLSNLSSSWFRSLYVLKFLNLLGNLYKTLGETSLFSHLPNLXTLKVGNSNSFTEIHEKDFTGLTFLEELEISAQNLQIYVPKSLKSIQNISHLILHLKQPVLLVDILVDIVSSLDCLELRDTNLHTFHFSEASISEMSTSVKKLIFRNVQFTDESFVEVVKLFNYVSGILEVEFDDCTHDGIGDFRALSLDRIRHLGNVETLTIRKLHIPQFFLFHDLSSIYPLTGKVKRVTIENSKVFLVPCLLSQHLKSLEYLDLSENLMSEETLKNSACKDAWPFLQTLVLRQNRLKSLEKTGELLLTLENLNSLDISKNNFLSMPETCQWPGKMKQLNLSSTRIHSLTQCLPQTLEILDVSNNNLDSFSLILPQLKELYISRNKLKTLPDASFLPVLSVMRISRNIINTFSKEQLDSFQQLKTLEAGGNNFICSCDFLSFTQGQQALGRVLVDWPDDYRCDSPSHVRGQRVQDARLSLSECHRAAVVSAACCALFLVLLLTGVLCHRFHGLWYMKMMWAWLQAKRKPRKAPRRDICYDAFVSYSERDSYWVENLMVQELEQFNPPFKLCLHKRDFIPGKWIIDNIIDSIEKSHKTIFVLSENFVXSEWCKYELDFSHFRLFDENNDAAILILLEPIDKKAIPQRFCKLRKIMNTKTYLEWPVDETQQEGFWLNLRAAIRS.

Positions 1-20 (MPRALWTAWVWAXIILSTEG) are cleaved as a signal peptide. The Extracellular segment spans residues 21–587 (ASDQASSLSC…ARLSLSECHR (567 aa)). A disulfide bridge connects residues Cys30 and Cys36. 19 LRR repeats span residues 54-77 (VKSLDLSNNEITYVGNRDLQRCVN), 78-101 (LKTLRLGANEIHTVEEDSFFHLRN), 102-125 (LEYLDLSYNRLSNLSSSWFRSLYV), 126-150 (LKFLNLLGNLYKTLGETSLFSHLPN), 151-175 (LXTLKVGNSNSFTEIHEKDFTGLTF), 176-199 (LEELEISAQNLQIYVPKSLKSIQN), 200-223 (ISHLILHLKQPVLLVDILVDIVSS), 224-250 (LDCLELRDTNLHTFHFSEASISEMSTS), 251-278 (VKKLIFRNVQFTDESFVEVVKLFNYVSG), 279-308 (ILEVEFDDCTHDGIGDFRALSLDRIRHLGN), 309-337 (VETLTIRKLHIPQFFLFHDLSSIYPLTGK), 338-361 (VKRVTIENSKVFLVPCLLSQHLKS), 362-388 (LEYLDLSENLMSEETLKNSACKDAWPF), 389-414 (LQTLVLRQNRLKSLEKTGELLLTLEN), 415-437 (LNSLDISKNNFLSMPETCQWPGK), 438-457 (MKQLNLSSTRIHSLTQCLPQ), 458-478 (TLEILDVSNNNLDSFSLILPQ), 479-500 (LKELYISRNKLKTLPDASFLPV), and 501-524 (LSVMRISRNIINTFSKEQLDSFQQ). An N-linked (GlcNAc...) asparagine glycan is attached at Asn114. A glycan (N-linked (GlcNAc...) asparagine) is linked at Asn199. An intrachain disulfide couples Cys353 to Cys382. A disulfide bond links Cys432 and Cys454. The N-linked (GlcNAc...) asparagine glycan is linked to Asn442. Residues 525 to 579 (LKTLEAGGNNFICSCDFLSFTQGQQALGRVLVDWPDDYRCDSPSHVRGQRVQDAR) form the LRRCT domain. Residues 588–608 (AAVVSAACCALFLVLLLTGVL) form a helical membrane-spanning segment. Residues 609-784 (CHRFHGLWYM…WLNLRAAIRS (176 aa)) are Cytoplasmic-facing. The region spanning 639–782 (ICYDAFVSYS…GFWLNLRAAI (144 aa)) is the TIR domain. Lys754 participates in a covalent cross-link: Glycyl lysine isopeptide (Lys-Gly) (interchain with G-Cter in ubiquitin). The ATG16L1-binding motif motif lies at 761-778 (YLEWPVDETQQEGFWLNL).

The protein belongs to the Toll-like receptor family. In terms of assembly, interacts with LY96, TLR1 and TLR6 (via extracellular domain). TLR2 seems to exist in heterodimers with either TLR1 or TLR6 before stimulation by the ligand. The heterodimers form bigger oligomers in response to their corresponding ligands as well as further heterotypic associations with other receptors such as CD14 and/or CD36. Binds MYD88 (via TIR domain). Interacts with TICAM1. Interacts with CNPY3. Interacts with ATG16L1. Interacts with PPP1R11. Interacts with TICAM2. Interacts with TIRAP. In terms of processing, ubiquitinated at Lys-754 by PPP1R11, leading to its degradation. Deubiquitinated by USP2. Glycosylation of Asn-442 is critical for secretion of the N-terminal ectodomain of TLR2.

The protein resides in the membrane. It localises to the cytoplasmic vesicle. It is found in the phagosome membrane. Its subcellular location is the membrane raft. Its function is as follows. Cooperates with LY96 to mediate the innate immune response to bacterial lipoproteins and other microbial cell wall components. Cooperates with TLR1 or TLR6 to mediate the innate immune response to bacterial lipoproteins or lipopeptides. Acts via MYD88 and TRAF6, leading to NF-kappa-B activation, cytokine secretion and the inflammatory response. May also promote apoptosis in response to lipoproteins. Forms activation clusters composed of several receptors depending on the ligand, these clusters trigger signaling from the cell surface and subsequently are targeted to the Golgi in a lipid-raft dependent pathway. Forms the cluster TLR2:TLR6:CD14:CD36 in response to diacylated lipopeptides and TLR2:TLR1:CD14 in response to triacylated lipopeptides. The protein is Toll-like receptor 2 (TLR2) of Bison bison (American bison).